The sequence spans 271 residues: MILLTIFWDTLLDILPIAAIIFGFQYIVIRKRIQRLPQVLAGFFMVWVGLSLFLVGLEQALFPMGELMASQLTNTDFLPAVEQGVQRHWADYYWVYLFAFAIGASTTIAEPSLIAVSIKAGEISGGTINPFMLRIAVALGMAFGITLGTWRIVMGWPLQWFVFAAYCLVIIQTLRSPKSIIPLAFDSGGVTTSTITVPIIAALGLGLAASIPGRSALMDGFGMIALACLFPIITVMGYAQIAQWKDKRKQTTPHLSYSKAPPPSKGDNNAL.

A run of 7 helical transmembrane segments spans residues 2–22, 36–56, 94–114, 130–150, 152–172, 193–213, and 216–236; these read ILLT…AIIF, LPQV…FLVG, WVYL…PSLI, PFML…LGTW, IVMG…VIIQ, STIT…SIPG, and ALMD…ITVM. The interval 252–271 is disordered; it reads TPHLSYSKAPPPSKGDNNAL.

It belongs to the UmpA/UmpB family. As to quaternary structure, heterodimer composed of UmpA and UmpB.

The protein resides in the cell membrane. Functionally, part of a two-component antiporter that catalyzes the efflux of Na(+), Li(+) and K(+) in exchange for external protons. Shows a preference for Na(+), followed by K(+) and Li(+). The polypeptide is Na(+), Li(+), K(+)/H(+) antiporter subunit B (Vreelandella zhaodongensis (Halomonas zhaodongensis)).